Reading from the N-terminus, the 63-residue chain is Small ribosomal subunit protein bS21 (63 aa).

Residues 40–52 show a composition bias toward basic and acidic residues; sequence KPSVKRKLKSEAA. The segment at 40-63 is disordered; the sequence is KPSVKRKLKSEAARKRKNKRGRRY. A compositionally biased stretch (basic residues) spans 53-63; that stretch reads RKRKNKRGRRY.

The protein belongs to the bacterial ribosomal protein bS21 family.

The chain is Small ribosomal subunit protein bS21 from Limosilactobacillus reuteri (strain DSM 20016) (Lactobacillus reuteri).